The primary structure comprises 221 residues: Beta-phosphoglucomutase (221 aa).

The active-site Nucleophile is aspartate 8. Mg(2+)-binding residues include aspartate 8 and aspartate 10. Residue aspartate 8 is modified to 4-aspartylphosphate. The active-site Proton donor/acceptor is the aspartate 10. Beta-D-glucose 6-phosphate contacts are provided by aspartate 10, glycine 46, valine 47, arginine 49, serine 116, lysine 117, and asparagine 118. Aspartate 170 contributes to the Mg(2+) binding site.

It belongs to the HAD-like hydrolase superfamily. CbbY/CbbZ/Gph/YieH family. In terms of assembly, monomer. Mg(2+) serves as cofactor. Post-translationally, autophosphorylated.

It localises to the cytoplasm. It catalyses the reaction beta-D-glucose 1-phosphate = beta-D-glucose 6-phosphate. Activated by phosphorylation. Competitively inhibited by alpha-D-galactose-1-phosphate. Its function is as follows. Catalyzes the interconversion of D-glucose 1-phosphate (G1P) and D-glucose 6-phosphate (G6P), forming beta-D-glucose 1,6-(bis)phosphate (beta-G16P) as an intermediate. The beta-phosphoglucomutase (Beta-PGM) acts on the beta-C(1) anomer of G1P. Glucose or lactose are used in preference to maltose, which is only utilized after glucose or lactose has been exhausted. It plays a key role in the regulation of the flow of carbohydrate intermediates in glycolysis and the formation of the sugar nucleotide UDP-glucose. This is Beta-phosphoglucomutase from Lactococcus lactis subsp. lactis (strain IL1403) (Streptococcus lactis).